A 930-amino-acid polypeptide reads, in one-letter code: Type I restriction enzyme SsaAORF53P endonuclease subunit (930 aa).

One can recognise a Helicase ATP-binding domain in the interval 254–418 (HQATETSNNG…DGRSTADIFG (165 aa)). 268–274 (TTGSGKT) serves as a coordination point for ATP.

The protein belongs to the HsdR family. In terms of assembly, the type I restriction/modification system is composed of three polypeptides R, M and S.

The enzyme catalyses Endonucleolytic cleavage of DNA to give random double-stranded fragments with terminal 5'-phosphates, ATP is simultaneously hydrolyzed.. In terms of biological role, the restriction (R) subunit of a type I restriction enzyme that recognizes an undetermined sequence and cleaves a random distance away. Subunit R is required for both nuclease and ATPase activities, but not for modification. After locating a non-methylated recognition site, the enzyme complex serves as a molecular motor that translocates DNA in an ATP-dependent manner until a collision occurs that triggers cleavage. This chain is Type I restriction enzyme SsaAORF53P endonuclease subunit, found in Staphylococcus saprophyticus subsp. saprophyticus (strain ATCC 15305 / DSM 20229 / NCIMB 8711 / NCTC 7292 / S-41).